A 719-amino-acid chain; its full sequence is Phosphoribosylformylglycinamidine synthase subunit PurL (719 aa).

His-47 is a catalytic residue. The ATP site is built by Tyr-50 and Lys-89. Glu-91 lines the Mg(2+) pocket. Substrate contacts are provided by residues 92–95 and Arg-114; that span reads SHNH. The Proton acceptor role is filled by His-93. Asp-115 contacts Mg(2+). Position 238 (Gln-238) interacts with substrate. A Mg(2+)-binding site is contributed by Asp-266. Residue 310–312 participates in substrate binding; it reads ESQ. ATP contacts are provided by Asp-488 and Gly-525. Asn-526 contributes to the Mg(2+) binding site. Ser-528 contributes to the substrate binding site.

The protein belongs to the FGAMS family. As to quaternary structure, monomer. Part of the FGAM synthase complex composed of 1 PurL, 1 PurQ and 2 PurS subunits.

The protein resides in the cytoplasm. It carries out the reaction N(2)-formyl-N(1)-(5-phospho-beta-D-ribosyl)glycinamide + L-glutamine + ATP + H2O = 2-formamido-N(1)-(5-O-phospho-beta-D-ribosyl)acetamidine + L-glutamate + ADP + phosphate + H(+). Its pathway is purine metabolism; IMP biosynthesis via de novo pathway; 5-amino-1-(5-phospho-D-ribosyl)imidazole from N(2)-formyl-N(1)-(5-phospho-D-ribosyl)glycinamide: step 1/2. Part of the phosphoribosylformylglycinamidine synthase complex involved in the purines biosynthetic pathway. Catalyzes the ATP-dependent conversion of formylglycinamide ribonucleotide (FGAR) and glutamine to yield formylglycinamidine ribonucleotide (FGAM) and glutamate. The FGAM synthase complex is composed of three subunits. PurQ produces an ammonia molecule by converting glutamine to glutamate. PurL transfers the ammonia molecule to FGAR to form FGAM in an ATP-dependent manner. PurS interacts with PurQ and PurL and is thought to assist in the transfer of the ammonia molecule from PurQ to PurL. The polypeptide is Phosphoribosylformylglycinamidine synthase subunit PurL (Jannaschia sp. (strain CCS1)).